Reading from the N-terminus, the 271-residue chain is Formamidopyrimidine-DNA glycosylase (271 aa).

Pro-2 serves as the catalytic Schiff-base intermediate with DNA. The active-site Proton donor is Glu-3. The Proton donor; for beta-elimination activity role is filled by Lys-58. Positions 91, 110, and 152 each coordinate DNA. The FPG-type zinc-finger motif lies at 237-271 (RAYGRGGQPCTVCQTELKEIKLGQRTSVFCPSCQR). Residue Arg-261 is the Proton donor; for delta-elimination activity of the active site.

Belongs to the FPG family. As to quaternary structure, monomer. Zn(2+) serves as cofactor.

The catalysed reaction is Hydrolysis of DNA containing ring-opened 7-methylguanine residues, releasing 2,6-diamino-4-hydroxy-5-(N-methyl)formamidopyrimidine.. The enzyme catalyses 2'-deoxyribonucleotide-(2'-deoxyribose 5'-phosphate)-2'-deoxyribonucleotide-DNA = a 3'-end 2'-deoxyribonucleotide-(2,3-dehydro-2,3-deoxyribose 5'-phosphate)-DNA + a 5'-end 5'-phospho-2'-deoxyribonucleoside-DNA + H(+). Involved in base excision repair of DNA damaged by oxidation or by mutagenic agents. Acts as a DNA glycosylase that recognizes and removes damaged bases. Has a preference for oxidized purines, such as 7,8-dihydro-8-oxoguanine (8-oxoG). Has AP (apurinic/apyrimidinic) lyase activity and introduces nicks in the DNA strand. Cleaves the DNA backbone by beta-delta elimination to generate a single-strand break at the site of the removed base with both 3'- and 5'-phosphates. This is Formamidopyrimidine-DNA glycosylase from Hahella chejuensis (strain KCTC 2396).